We begin with the raw amino-acid sequence, 149 residues long: Probable flagellum biosynthesis repressor protein FlbT (149 aa).

The protein belongs to the FlbT family.

Has a post-transcriptional repressor function in flagellum biogenesis. Associates with the 5'-UTR of fljK mRNA and promotes its degradation. This is Probable flagellum biosynthesis repressor protein FlbT from Rhizobium etli (strain CIAT 652).